The chain runs to 461 residues: Protein IQ-DOMAIN 2 (461 aa).

The disordered stretch occupies residues 1-55; sequence MGKKAKWFSSVKKAFSPDSKKSKQKLAEGQNGVISNPPVVDNVRQSSSSPPPALA. The 29-residue stretch at 114–142 folds into the IQ domain; the sequence is EEAAAILIQTIFRGYLARRALRAMRGLVR. Positions 141-158 are calmodulin-binding; the sequence is VRLKLLMEGSVVKRQAAN. The segment at 278 to 461 is disordered; it reads PLESSEKEQS…GVTVTNGAGS (184 aa). The segment covering 310–345 has biased composition (polar residues); it reads LTRNGSTQPNTPSSARGTPRNKNSFFSPPTPSRLNQ. The Nuclear localization signal signature appears at 425 to 432; that stretch reads KKRLSYPT.

Belongs to the IQD family. In terms of assembly, binds to multiple calmodulin (CaM) in the presence of Ca(2+) and CaM-like proteins.

It localises to the nucleus. It is found in the cytoplasm. The protein localises to the cytoskeleton. Its function is as follows. May be involved in cooperative interactions with calmodulins or calmodulin-like proteins. Recruits calmodulin proteins to microtubules, thus being a potential scaffold in cellular signaling and trafficking. May associate with nucleic acids and regulate gene expression at the transcriptional or post-transcriptional level. In Arabidopsis thaliana (Mouse-ear cress), this protein is Protein IQ-DOMAIN 2.